We begin with the raw amino-acid sequence, 300 residues long: Acetylglutamate kinase (300 aa).

Residues 68 to 69, R90, and N195 each bind substrate; that span reads GG.

Belongs to the acetylglutamate kinase family. ArgB subfamily.

It localises to the cytoplasm. The catalysed reaction is N-acetyl-L-glutamate + ATP = N-acetyl-L-glutamyl 5-phosphate + ADP. Its pathway is amino-acid biosynthesis; L-arginine biosynthesis; N(2)-acetyl-L-ornithine from L-glutamate: step 2/4. Functionally, catalyzes the ATP-dependent phosphorylation of N-acetyl-L-glutamate. This chain is Acetylglutamate kinase, found in Stutzerimonas stutzeri (strain A1501) (Pseudomonas stutzeri).